A 147-amino-acid chain; its full sequence is Nucleoside diphosphate kinase (147 aa).

ATP contacts are provided by Lys-9, Phe-57, Arg-85, Thr-91, Arg-102, and Asn-112. His-115 acts as the Pros-phosphohistidine intermediate in catalysis.

This sequence belongs to the NDK family. Requires Mg(2+) as cofactor.

Its subcellular location is the cytoplasm. It catalyses the reaction a 2'-deoxyribonucleoside 5'-diphosphate + ATP = a 2'-deoxyribonucleoside 5'-triphosphate + ADP. The enzyme catalyses a ribonucleoside 5'-diphosphate + ATP = a ribonucleoside 5'-triphosphate + ADP. Functionally, major role in the synthesis of nucleoside triphosphates other than ATP. The ATP gamma phosphate is transferred to the NDP beta phosphate via a ping-pong mechanism, using a phosphorylated active-site intermediate. The chain is Nucleoside diphosphate kinase from Thermoplasma volcanium (strain ATCC 51530 / DSM 4299 / JCM 9571 / NBRC 15438 / GSS1).